The primary structure comprises 181 residues: Dehydration-responsive element-binding protein 1E (181 aa).

A Nuclear localization signal motif is present at residues Lys-14 to Arg-26. The AP2/ERF DNA-binding region spans Ile-29–Ser-86.

Belongs to the AP2/ERF transcription factor family. ERF subfamily.

The protein localises to the nucleus. Its function is as follows. Transcriptional activator that binds specifically to the DNA sequence 5'-[AG]CCGAC-3'. Binding to the C-repeat/DRE element mediates cold or dehydration-inducible transcription. CBF/DREB1 factors play a key role in freezing tolerance and cold acclimation. The polypeptide is Dehydration-responsive element-binding protein 1E (DREB1E) (Arabidopsis thaliana (Mouse-ear cress)).